Here is an 87-residue protein sequence, read N- to C-terminus: Large ribosomal subunit protein bL27 (87 aa).

Belongs to the bacterial ribosomal protein bL27 family.

The polypeptide is Large ribosomal subunit protein bL27 (Pseudarthrobacter chlorophenolicus (strain ATCC 700700 / DSM 12829 / CIP 107037 / JCM 12360 / KCTC 9906 / NCIMB 13794 / A6) (Arthrobacter chlorophenolicus)).